Consider the following 202-residue polypeptide: MGIRKPALSVGEARRLAAARPEIVHPSLPVATQNSTLPQPPENLDEEDRRPAPATAKRCHSSDQQSMLTVDALSSTTAPEKIQVFLSARPPAPEVSKIYDNLILQYSPSKSLQMILRRALGDFENMLADGSFRAAPKSYPIPHTAFEKSIIVQTSRMFPVSLIEAARNHFDPLGLETARAFGHKLATAALACFFAREKATNS.

Residues 21–66 are disordered; sequence PEIVHPSLPVATQNSTLPQPPENLDEEDRRPAPATAKRCHSSDQQS.

The polypeptide is Protein virC2 (virC2) (Agrobacterium fabrum (strain C58 / ATCC 33970) (Agrobacterium tumefaciens (strain C58))).